A 129-amino-acid polypeptide reads, in one-letter code: Small ribosomal subunit protein uS11 (129 aa).

This sequence belongs to the universal ribosomal protein uS11 family. In terms of assembly, part of the 30S ribosomal subunit. Interacts with proteins S7 and S18. Binds to IF-3.

Located on the platform of the 30S subunit, it bridges several disparate RNA helices of the 16S rRNA. Forms part of the Shine-Dalgarno cleft in the 70S ribosome. This Lactiplantibacillus plantarum (strain ATCC BAA-793 / NCIMB 8826 / WCFS1) (Lactobacillus plantarum) protein is Small ribosomal subunit protein uS11.